A 349-amino-acid polypeptide reads, in one-letter code: Ribosomal RNA small subunit methyltransferase C (349 aa).

The protein belongs to the methyltransferase superfamily. RsmC family. As to quaternary structure, monomer.

Its subcellular location is the cytoplasm. The enzyme catalyses guanosine(1207) in 16S rRNA + S-adenosyl-L-methionine = N(2)-methylguanosine(1207) in 16S rRNA + S-adenosyl-L-homocysteine + H(+). In terms of biological role, specifically methylates the guanine in position 1207 of 16S rRNA in the 30S particle. This is Ribosomal RNA small subunit methyltransferase C from Psychromonas ingrahamii (strain DSM 17664 / CCUG 51855 / 37).